A 215-amino-acid chain; its full sequence is Nuclear autoantigen Sp-100 (215 aa).

The region spanning 1–31 (EGDRGASKNWKLSIRCGGYTLKVLTENKFLP) is the SAND domain. 2 consecutive DNA-binding regions (HMG box) follow at residues 32-108 (EPPS…KTYI) and 124-192 (PKRP…AACR). The Nuclear localization signal motif lies at 72-89 (KKRSEMWKTIFAKEKGKF). Disordered stretches follow at residues 104–124 (MKTYIPPKGEKKKKFKDPNAP) and 193–215 (AKGKPNSATKRVVKAEKSKKKKE).

Homodimer. Interacts with members of the HP1 family of nonhistone chromosomal protein, such as CBX5 and CBX3 via the PxVxL motif. Interacts with ETS1; the interaction is direct and modulates ETS1 transcriptional activity. Interacts with the MRN complex which is composed of two heterodimers RAD50/MRE11 associated with a single NBN; recruits the complex to PML-related bodies. Interacts with HIPK2; positively regulates TP53-dependent transcription. Interacts with CASP8AP2; may negatively regulate CASP8AP2 export from the nucleus to the cytoplasm. Post-translationally, phosphorylated. Sumoylated. Sumoylated with SUMO1. Sumoylation depends on a functional nuclear localization signal but is not necessary for nuclear import or nuclear body targeting. Sumoylation may stabilize the interaction with CBX5.

It is found in the nucleus. The protein localises to the PML body. The protein resides in the nuclear body. It localises to the cytoplasm. Functionally, together with PML, this tumor suppressor is a major constituent of the PML bodies, a subnuclear organelle involved in a large number of physiological processes including cell growth, differentiation and apoptosis. Functions as a transcriptional coactivator of ETS1 and ETS2. Under certain conditions, it may also act as a corepressor of ETS1 preventing its binding to DNA. Through the regulation of ETS1 it may play a role in angiogenesis, controlling endothelial cell motility and invasion. Through interaction with the MRN complex it may be involved in the regulation of telomeres lengthening. May also regulate TP53-mediated transcription and through CASP8AP2, regulate FAS-mediated apoptosis. May also play a role in infection by viruses through mechanisms that may involve chromatin and/or transcriptional regulation. The protein is Nuclear autoantigen Sp-100 (SP100) of Pan troglodytes (Chimpanzee).